A 371-amino-acid chain; its full sequence is tRNA-specific 2-thiouridylase MnmA (371 aa).

ATP is bound by residues 13–20 (GMSGGVDS) and methionine 39. The interval 99-101 (NPD) is interaction with target base in tRNA. Cysteine 104 acts as the Nucleophile in catalysis. The cysteines at positions 104 and 200 are disulfide-linked. Glycine 128 lines the ATP pocket. Positions 150–152 (KDQ) are interaction with tRNA. Cysteine 200 serves as the catalytic Cysteine persulfide intermediate. Residues 308-309 (RY) are interaction with tRNA.

The protein belongs to the MnmA/TRMU family.

It is found in the cytoplasm. It catalyses the reaction S-sulfanyl-L-cysteinyl-[protein] + uridine(34) in tRNA + AH2 + ATP = 2-thiouridine(34) in tRNA + L-cysteinyl-[protein] + A + AMP + diphosphate + H(+). Functionally, catalyzes the 2-thiolation of uridine at the wobble position (U34) of tRNA, leading to the formation of s(2)U34. This is tRNA-specific 2-thiouridylase MnmA from Listeria monocytogenes serovar 1/2a (strain ATCC BAA-679 / EGD-e).